The chain runs to 134 residues: MFDGIGFMELLLIGILGLVVLGPERLPVAVRSLTGWIRALKRMANSVKDELEQELKIDQLHADLKKAESKGLANLSPELQESIDQLKKAAESVNRPYKVEDTSPVAPKASPDESPSVVEAKSSEATSENSSTPK.

A helical membrane pass occupies residues 2-22 (FDGIGFMELLLIGILGLVVLG). The disordered stretch occupies residues 90-134 (AESVNRPYKVEDTSPVAPKASPDESPSVVEAKSSEATSENSSTPK). Over residues 123–134 (SEATSENSSTPK) the composition is skewed to polar residues.

Belongs to the TatB family. As to quaternary structure, the Tat system comprises two distinct complexes: a TatABC complex, containing multiple copies of TatA, TatB and TatC subunits, and a separate TatA complex, containing only TatA subunits. Substrates initially bind to the TatABC complex, which probably triggers association of the separate TatA complex to form the active translocon.

It localises to the cell inner membrane. Part of the twin-arginine translocation (Tat) system that transports large folded proteins containing a characteristic twin-arginine motif in their signal peptide across membranes. Together with TatC, TatB is part of a receptor directly interacting with Tat signal peptides. TatB may form an oligomeric binding site that transiently accommodates folded Tat precursor proteins before their translocation. This chain is Sec-independent protein translocase protein TatB, found in Shewanella frigidimarina (strain NCIMB 400).